A 1828-amino-acid polypeptide reads, in one-letter code: Proteasome activator complex subunit 4 (1828 aa).

HEAT repeat units lie at residues 462–506 (PEGP…LVDC), 985–1024 (NFCCRDLIPLVLEFLRPERQDVTQQQFKGALYCLLGNHGG), 1164–1202 (YVLPVRAIRYLVQCLNHDALIVRKMAISTVAGILKQLKR), 1339–1377 (DAFLPIIKPHLERLVADSHESTQRCAAEIVAGLIRGSKH), 1621–1659 (PVQVPLVLDVLRQTARSSSWHARYTVLTYIQTMVFYNLF), and 1665–1703 (EESVQGVRWLILQLMEDEQLEVREMAATTLSGLLQCNFL). Residues 1635 to 1723 (ARSSSWHARY…EALCKTRLPK (89 aa)) are bromodomain-like (BRDL).

The protein belongs to the BLM10 family. In terms of assembly, homodimer. Interacts with the 20S and 26S proteasomes.

It is found in the cytoplasm. The protein localises to the cytosol. It localises to the nucleus. Its subcellular location is the nucleus speckle. Associated component of the proteasome that specifically recognizes acetylated histones and promotes ATP- and ubiquitin-independent degradation of core histones during DNA damage response. Recognizes and binds acetylated histones via its bromodomain-like (BRDL) region and activates the proteasome by opening the gated channel for substrate entry. Binds to the core proteasome via its C-terminus, which occupies the same binding sites as the proteasomal ATPases, opening the closed structure of the proteasome via an active gating mechanism. involved in DNA damage response in somatic cells: binds to acetylated histones and promotes degradation of histones. This Xenopus laevis (African clawed frog) protein is Proteasome activator complex subunit 4 (psme4).